Reading from the N-terminus, the 187-residue chain is Ribosome maturation factor RimM (187 aa).

A compositionally biased stretch (polar residues) spans 1–17 (MTSTPSPSTADPNSTND). A disordered region spans residues 1–21 (MTSTPSPSTADPNSTNDWLPV). Positions 111-184 (EGEFHLLDLV…WLLLTPPPGL (74 aa)) constitute a PRC barrel domain.

The protein belongs to the RimM family. In terms of assembly, binds ribosomal protein uS19.

It localises to the cytoplasm. An accessory protein needed during the final step in the assembly of 30S ribosomal subunit, possibly for assembly of the head region. Essential for efficient processing of 16S rRNA. May be needed both before and after RbfA during the maturation of 16S rRNA. It has affinity for free ribosomal 30S subunits but not for 70S ribosomes. The protein is Ribosome maturation factor RimM of Synechococcus sp. (strain CC9311).